Consider the following 398-residue polypeptide: Serine/threonine-protein phosphatase 2A activator (398 aa).

ATP-binding residues include R137, T142, and G143. The Mg(2+) site is built by G197 and D203. 3 residues coordinate ATP: P293, Q296, and H297. Pro residues predominate over residues 343–352; that stretch reads PVATAPPPPA. A disordered region spans residues 343–398; that stretch reads PVATAPPPPAESLSIEQNVGDSSSESSDNSVVLRPSTSSSSLVAAAEGSGDKPSKE. The segment covering 363-388 has biased composition (low complexity); the sequence is DSSSESSDNSVVLRPSTSSSSLVAAA.

This sequence belongs to the PTPA-type PPIase family. As to quaternary structure, associates with PP2A heterodimeric core enzyme PP2A(D), composed of a catalytic subunit (subunit C) and a constant regulatory subunit (PR65 or subunit A). Interacts with the catalytic subunit Pp4-19C of the serine/threonine-protein phosphatase 4 (PP4) complex; thereby mediating basal localization of the Miranda (Mira) complex; probably by facilitating the dephosphorylation of Mira.

It is found in the cytoplasm. The protein localises to the nucleus. It carries out the reaction [protein]-peptidylproline (omega=180) = [protein]-peptidylproline (omega=0). PPIases accelerate the folding of proteins. It catalyzes the cis-trans isomerization of proline imidic peptide bonds in oligopeptides. Acts as a regulatory subunit for serine/threonine-protein phosphatase 2A (PP2A). Modulates PP2A activity or substrate specificity, probably by inducing a conformational change in the catalytic subunit, a proposed direct target of the PPIase. Acts as mediator for the basal localization of the Miranda (Mira) complex during mitosis of larval neuroblast asymmetric division. Associates with the phosphatase 4 (PP4) complex to mediate basal localization of Mira; probably by facilitating the dephosphorylation of Mira. Cortical association of Mira mediated by the PTPA-PP4 complex seems to be independent of aPKC activity. The protein is Serine/threonine-protein phosphatase 2A activator of Drosophila melanogaster (Fruit fly).